The primary structure comprises 233 residues: tRNA (guanine-N(7)-)-methyltransferase (233 aa).

Residues 1–23 are disordered; the sequence is MSPQDRPSRTTEAFFGRRRGKPV. Residues glutamate 64, glutamate 89, aspartate 116, and aspartate 138 each coordinate S-adenosyl-L-methionine. The active site involves aspartate 138. Substrate is bound by residues lysine 142, aspartate 174, and 212–215; that span reads TRYE.

The protein belongs to the class I-like SAM-binding methyltransferase superfamily. TrmB family.

It catalyses the reaction guanosine(46) in tRNA + S-adenosyl-L-methionine = N(7)-methylguanosine(46) in tRNA + S-adenosyl-L-homocysteine. The protein operates within tRNA modification; N(7)-methylguanine-tRNA biosynthesis. In terms of biological role, catalyzes the formation of N(7)-methylguanine at position 46 (m7G46) in tRNA. This chain is tRNA (guanine-N(7)-)-methyltransferase, found in Mesorhizobium japonicum (strain LMG 29417 / CECT 9101 / MAFF 303099) (Mesorhizobium loti (strain MAFF 303099)).